Reading from the N-terminus, the 188-residue chain is dCTP deaminase (188 aa).

Residues lysine 111–arginine 116, threonine 135–glutamate 137, glutamine 156, tyrosine 170, and glutamine 180 each bind dCTP. The active-site Proton donor/acceptor is the glutamate 137.

This sequence belongs to the dCTP deaminase family. As to quaternary structure, homotrimer.

It carries out the reaction dCTP + H2O + H(+) = dUTP + NH4(+). It participates in pyrimidine metabolism; dUMP biosynthesis; dUMP from dCTP (dUTP route): step 1/2. Its function is as follows. Catalyzes the deamination of dCTP to dUTP. This chain is dCTP deaminase, found in Nitrosococcus oceani (strain ATCC 19707 / BCRC 17464 / JCM 30415 / NCIMB 11848 / C-107).